The following is a 412-amino-acid chain: Multifunctional CCA protein (412 aa).

ATP contacts are provided by glycine 8 and arginine 11. CTP-binding residues include glycine 8 and arginine 11. Aspartate 21 and aspartate 23 together coordinate Mg(2+). 3 residues coordinate ATP: arginine 91, arginine 138, and arginine 141. Positions 91, 138, and 141 each coordinate CTP. The HD domain occupies 229–334 (RGQHTLLALQ…LELFNQLDVW (106 aa)).

Belongs to the tRNA nucleotidyltransferase/poly(A) polymerase family. Bacterial CCA-adding enzyme type 1 subfamily. Monomer. Can also form homodimers and oligomers. Mg(2+) is required as a cofactor. Ni(2+) serves as cofactor.

The enzyme catalyses a tRNA precursor + 2 CTP + ATP = a tRNA with a 3' CCA end + 3 diphosphate. It carries out the reaction a tRNA with a 3' CCA end + 2 CTP + ATP = a tRNA with a 3' CCACCA end + 3 diphosphate. Its function is as follows. Catalyzes the addition and repair of the essential 3'-terminal CCA sequence in tRNAs without using a nucleic acid template. Adds these three nucleotides in the order of C, C, and A to the tRNA nucleotide-73, using CTP and ATP as substrates and producing inorganic pyrophosphate. tRNA 3'-terminal CCA addition is required both for tRNA processing and repair. Also involved in tRNA surveillance by mediating tandem CCA addition to generate a CCACCA at the 3' terminus of unstable tRNAs. While stable tRNAs receive only 3'-terminal CCA, unstable tRNAs are marked with CCACCA and rapidly degraded. This is Multifunctional CCA protein from Haemophilus ducreyi (strain 35000HP / ATCC 700724).